A 395-amino-acid chain; its full sequence is Probable peptidoglycan glycosyltransferase FtsW (395 aa).

At 1-24 (MADLAAGVAERGPRLSLWSSLDQR) the chain is on the cytoplasmic side. The helical transmembrane segment at 25–45 (LVWVVAATALLGLVMVASASI) threads the bilayer. Residues 46 to 62 (SMAEQATGDPFYFFKRQ) are Periplasmic-facing. The helical transmembrane segment at 63–83 (IFFALLGLGMALALLQIPLAT) threads the bilayer. Topologically, residues 84 to 86 (WER) are cytoplasmic. Residues 87 to 107 (AGPGLLLGALALLVLVLIPGV) form a helical membrane-spanning segment. The Periplasmic segment spans residues 108–116 (GREVNGAVR). A helical transmembrane segment spans residues 117-137 (WIPLGVFNLQVAEVVKVLLAL). Residues 138–152 (YLAGFLVRRQQQLRT) are Cytoplasmic-facing. The helical transmembrane segment at 153-173 (SMAAFLVPVLVSAACAFLLLL) threads the bilayer. At 174 to 178 (QPDFG) the chain is on the periplasmic side. The helical transmembrane segment at 179 to 199 (TALMLMALAVGLLYLAGAPLW) threads the bilayer. Arginine 200 is a topological domain (cytoplasmic). Residues 201–221 (FAALVGVLAAAAAALVVYSPY) traverse the membrane as a helical segment. Residues 222–276 (RWQRVTAFMDPWSDPFNTGFQLTQSLIAIGRGDWLGVGLGGSVQKLFYLPEAHTD) are Periplasmic-facing. Residues 277–297 (FVFSVLAEELGWLGVLAVVLL) traverse the membrane as a helical segment. The Cytoplasmic portion of the chain corresponds to 298 to 316 (FSYIVWRAMAVGWQCHRHR). A helical transmembrane segment spans residues 317–337 (LPFAGYLAWAVGLALGLQAFI). The Periplasmic portion of the chain corresponds to 338-352 (NMGVATGLLPTKGLT). A helical transmembrane segment spans residues 353–373 (LPLFSYGGSSALATGAMVGLL). The Cytoplasmic portion of the chain corresponds to 374-395 (LRCGYELAQARAEGRRPEEAAS).

The protein belongs to the SEDS family. FtsW subfamily.

Its subcellular location is the cell inner membrane. The catalysed reaction is [GlcNAc-(1-&gt;4)-Mur2Ac(oyl-L-Ala-gamma-D-Glu-L-Lys-D-Ala-D-Ala)](n)-di-trans,octa-cis-undecaprenyl diphosphate + beta-D-GlcNAc-(1-&gt;4)-Mur2Ac(oyl-L-Ala-gamma-D-Glu-L-Lys-D-Ala-D-Ala)-di-trans,octa-cis-undecaprenyl diphosphate = [GlcNAc-(1-&gt;4)-Mur2Ac(oyl-L-Ala-gamma-D-Glu-L-Lys-D-Ala-D-Ala)](n+1)-di-trans,octa-cis-undecaprenyl diphosphate + di-trans,octa-cis-undecaprenyl diphosphate + H(+). Its pathway is cell wall biogenesis; peptidoglycan biosynthesis. In terms of biological role, peptidoglycan polymerase that is essential for cell division. This Halorhodospira halophila (strain DSM 244 / SL1) (Ectothiorhodospira halophila (strain DSM 244 / SL1)) protein is Probable peptidoglycan glycosyltransferase FtsW.